We begin with the raw amino-acid sequence, 360 residues long: Phospho-N-acetylmuramoyl-pentapeptide-transferase (360 aa).

A run of 10 helical transmembrane segments spans residues 27 to 47, 73 to 93, 94 to 114, 132 to 152, 168 to 188, 199 to 219, 236 to 256, 263 to 283, 288 to 308, and 338 to 358; these read ILSIITALTISLWMGPKLIAW, TMGGIMILTAISVTVFLWADL, TNPYVWAVMFVLLGYGAVGFV, WKYFWQSSIALVVAFALYAYG, VMPQLGLAYILLTYFVIVGTS, GLAIMPTVFVAAGFAFIAWAT, ASELVVVCAAIVGAGFGFLWF, VFMGDVGSLALGGALGTIAVL, FLLVIMGGVFVVETLSVILQV, and VIVRFWIISMLLVLIALATLK.

Belongs to the glycosyltransferase 4 family. MraY subfamily. Mg(2+) is required as a cofactor.

Its subcellular location is the cell inner membrane. The catalysed reaction is UDP-N-acetyl-alpha-D-muramoyl-L-alanyl-gamma-D-glutamyl-meso-2,6-diaminopimeloyl-D-alanyl-D-alanine + di-trans,octa-cis-undecaprenyl phosphate = di-trans,octa-cis-undecaprenyl diphospho-N-acetyl-alpha-D-muramoyl-L-alanyl-D-glutamyl-meso-2,6-diaminopimeloyl-D-alanyl-D-alanine + UMP. It functions in the pathway cell wall biogenesis; peptidoglycan biosynthesis. In terms of biological role, catalyzes the initial step of the lipid cycle reactions in the biosynthesis of the cell wall peptidoglycan: transfers peptidoglycan precursor phospho-MurNAc-pentapeptide from UDP-MurNAc-pentapeptide onto the lipid carrier undecaprenyl phosphate, yielding undecaprenyl-pyrophosphoryl-MurNAc-pentapeptide, known as lipid I. The sequence is that of Phospho-N-acetylmuramoyl-pentapeptide-transferase from Aliivibrio fischeri (strain MJ11) (Vibrio fischeri).